A 473-amino-acid polypeptide reads, in one-letter code: T-box transcription factor TBX6L (473 aa).

Residues 43-217 (LWDKFSSIGT…NNPFAKGFRD (175 aa)) constitute a DNA-binding region (T-box). The segment at 342 to 361 (RLNPQETHHNSRPKIQLQPP) is disordered.

As to expression, exclusively expressed by ventral mesendoderm.

It localises to the nucleus. In terms of biological role, probable transcriptional regulator involved in developmental processes. The chain is T-box transcription factor TBX6L (tbx6l) from Danio rerio (Zebrafish).